The primary structure comprises 206 residues: Sortase A (206 aa).

The Cytoplasmic segment spans residues 1–6 (MKKWTN). Residues 7-24 (RLMTIAGVVLILVAAYLF) traverse the membrane as a helical segment. At 25-206 (AKPHIDNYLH…RKIFVATEVK (182 aa)) the chain is on the extracellular side. The tract at residues 49–69 (VKEQASKDKKQQAKPQIPKDK) is disordered. Positions 105, 108, 112, and 114 each coordinate Ca(2+). The active-site Proton donor/acceptor is H120. Ca(2+) is bound at residue E171. C184 functions as the Acyl-thioester intermediate in the catalytic mechanism.

It belongs to the bacterial sortase family. Class A subfamily. As to quaternary structure, monomer and homodimer; in equilibrium.

Its subcellular location is the cell membrane. It carries out the reaction The enzyme catalyzes a cell wall sorting reaction in which a surface protein with a sorting signal containing a LPXTG motif is cleaved between the Thr and Gly residue. The resulting threonine carboxyl end of the protein is covalently attached to a pentaglycine cross-bridge of peptidoglycan.. Its activity is regulated as follows. Sortase activity is regulated by monomer-homodimer equilibrium. Mutant cells with monomeric SrtA display more adhesive proteins on the cell surface and are more invasive than wild-type cells, which have majority of SrtA in dimeric form. Dimerization may suppress the enzymatic activity on cell membranes. Stimulated by calcium ions, which promote substrate binding. Calcium ions bind to SrtA and modulate both the structure and dynamics of a large active site loop. Can also be stimulated, to a lesser extent, by Mg(2+) and Mn(2+). Inhibited by sulfhydryl-modifying reagents. Functionally, transpeptidase that anchors surface proteins to the cell wall. Recognizes and modifies its substrate by proteolytic cleavage of a C-terminal sorting signal. Following cleavage, a covalent intermediate is formed via a thioester bond between the sortase and its substrate, which is then transferred and covalently attached to the cell wall. This sortase recognizes a Leu-Pro-x-Thr-Gly (LPXTG) motif, which is cleaved by the sortase between the threonine and glycine residues. Utilizes lipid II as the peptidoglycan substrate for the sorting reaction. Responsible for the display of important virulence factors. Important for interactions with the host and host colonization during infection. The protein is Sortase A of Staphylococcus aureus (strain NCTC 8325 / PS 47).